The sequence spans 237 residues: Probable septum site-determining protein MinC (237 aa).

This sequence belongs to the MinC family. Interacts with MinD and FtsZ.

Its function is as follows. Cell division inhibitor that blocks the formation of polar Z ring septums. Rapidly oscillates between the poles of the cell to destabilize FtsZ filaments that have formed before they mature into polar Z rings. Prevents FtsZ polymerization. The polypeptide is Probable septum site-determining protein MinC (Neisseria gonorrhoeae).